Consider the following 304-residue polypeptide: Probable endonuclease 4 (304 aa).

Zn(2+)-binding residues include H75, H115, E151, D185, H188, H221, D234, H236, and E266.

The protein belongs to the AP endonuclease 2 family. The cofactor is Zn(2+).

The catalysed reaction is Endonucleolytic cleavage to 5'-phosphooligonucleotide end-products.. In terms of biological role, endonuclease IV plays a role in DNA repair. It cleaves phosphodiester bonds at apurinic or apyrimidinic (AP) sites, generating a 3'-hydroxyl group and a 5'-terminal sugar phosphate. The polypeptide is Probable endonuclease 4 (Ureaplasma urealyticum serovar 10 (strain ATCC 33699 / Western)).